A 215-amino-acid polypeptide reads, in one-letter code: Cytochrome b6 (215 aa).

Residues 32 to 52 traverse the membrane as a helical segment; that stretch reads IFYCLGGITLTCFLVQVATGF. Position 35 (Cys35) interacts with heme c. Heme b is bound by residues His86 and His100. 3 consecutive transmembrane segments (helical) span residues 90–110, 116–136, and 186–206; these read ASMMVLMMILHVFRVYLTGGF, LTWVTGVILAVLTVSFGVTGY, and LHTFILPLLTAVFMPMHFLMI. Heme b contacts are provided by His187 and His202.

Belongs to the cytochrome b family. PetB subfamily. As to quaternary structure, the 4 large subunits of the cytochrome b6-f complex are cytochrome b6, subunit IV (17 kDa polypeptide, PetD), cytochrome f and the Rieske protein, while the 4 small subunits are PetG, PetL, PetM and PetN. The complex functions as a dimer. Requires heme b as cofactor. It depends on heme c as a cofactor.

The protein localises to the plastid. It is found in the chloroplast thylakoid membrane. Component of the cytochrome b6-f complex, which mediates electron transfer between photosystem II (PSII) and photosystem I (PSI), cyclic electron flow around PSI, and state transitions. The polypeptide is Cytochrome b6 (Pinus koraiensis (Korean pine)).